A 305-amino-acid polypeptide reads, in one-letter code: uncharacterized protein (305 aa).

The segment at 53–185 is disordered; it reads SGRIGDGDDG…TGPRSSRTVG (133 aa). Composition is skewed to basic and acidic residues over residues 95–116 and 128–142; these read VEER…ERPT and GSER…RSEG. Residues 161–171 show a composition bias toward polar residues; sequence GNTQAPSQSAE. Residues 260–302 form an RING-type; atypical zinc finger; sequence CAICMSNFIKNQRLRVLPCDHRFHVGCVDKWLLGHSNKCPVCR.

This is an uncharacterized protein from Encephalitozoon cuniculi (strain GB-M1) (Microsporidian parasite).